The following is a 394-amino-acid chain: ATP phosphoribosyltransferase regulatory subunit (394 aa).

This sequence belongs to the class-II aminoacyl-tRNA synthetase family. HisZ subfamily. In terms of assembly, heteromultimer composed of HisG and HisZ subunits.

The protein localises to the cytoplasm. Its pathway is amino-acid biosynthesis; L-histidine biosynthesis; L-histidine from 5-phospho-alpha-D-ribose 1-diphosphate: step 1/9. In terms of biological role, required for the first step of histidine biosynthesis. May allow the feedback regulation of ATP phosphoribosyltransferase activity by histidine. In Pseudomonas aeruginosa (strain LESB58), this protein is ATP phosphoribosyltransferase regulatory subunit.